We begin with the raw amino-acid sequence, 298 residues long: tRNA pseudouridine synthase A (298 aa).

Catalysis depends on D56, which acts as the Nucleophile. Y125 is a binding site for substrate.

It belongs to the tRNA pseudouridine synthase TruA family. Homodimer.

It carries out the reaction uridine(38/39/40) in tRNA = pseudouridine(38/39/40) in tRNA. Formation of pseudouridine at positions 38, 39 and 40 in the anticodon stem and loop of transfer RNAs. This Bifidobacterium animalis subsp. lactis (strain AD011) protein is tRNA pseudouridine synthase A.